The sequence spans 472 residues: Eukaryotic translation initiation factor 2 subunit 3 (472 aa).

The tr-type G domain occupies 39-247; the sequence is QATINIGTIG…YIVNKIPVPV (209 aa). A G1 region spans residues 48 to 55; it reads GHVAHGKS. A GTP-binding site is contributed by 51 to 56; the sequence is AHGKST. Residues 76–80 are G2; that stretch reads NITIK. The interval 134–137 is G3; it reads DCPG. GTP-binding positions include 190–193 and 225–227; these read NKID and SAQ. The G4 stretch occupies residues 190–193; the sequence is NKID. The G5 stretch occupies residues 225-227; sequence SAQ. An interacts with cdc123 region spans residues 457–469; that stretch reads GQIRRGVTITPTV.

It belongs to the TRAFAC class translation factor GTPase superfamily. Classic translation factor GTPase family. EIF2G subfamily. Eukaryotic translation initiation factor 2 eIF2 is a heterotrimeric complex composed of an alpha (EIF2S1), a beta (EIF2S2) and a gamma (EIF2S3) chain. eIF2 is member of the 43S pre-initiation complex (43S PIC).

The protein localises to the cytoplasm. Its subcellular location is the cytosol. The enzyme catalyses GTP + H2O = GDP + phosphate + H(+). Member of the eIF2 complex that functions in the early steps of protein synthesis by forming a ternary complex with GTP and initiator tRNA. This complex binds to a 40S ribosomal subunit, followed by mRNA binding to form the 43S pre-initiation complex (43S PIC). Junction of the 60S ribosomal subunit to form the 80S initiation complex is preceded by hydrolysis of the GTP bound to eIF2 and release of an eIF2-GDP binary complex. In order for eIF2 to recycle and catalyze another round of initiation, the GDP bound to eIF2 must exchange with GTP by way of a reaction catalyzed by eIF-2B. In Danio rerio (Zebrafish), this protein is Eukaryotic translation initiation factor 2 subunit 3.